Here is a 481-residue protein sequence, read N- to C-terminus: Aspartyl/glutamyl-tRNA(Asn/Gln) amidotransferase subunit B (481 aa).

It belongs to the GatB/GatE family. GatB subfamily. In terms of assembly, heterotrimer of A, B and C subunits.

The catalysed reaction is L-glutamyl-tRNA(Gln) + L-glutamine + ATP + H2O = L-glutaminyl-tRNA(Gln) + L-glutamate + ADP + phosphate + H(+). The enzyme catalyses L-aspartyl-tRNA(Asn) + L-glutamine + ATP + H2O = L-asparaginyl-tRNA(Asn) + L-glutamate + ADP + phosphate + 2 H(+). In terms of biological role, allows the formation of correctly charged Asn-tRNA(Asn) or Gln-tRNA(Gln) through the transamidation of misacylated Asp-tRNA(Asn) or Glu-tRNA(Gln) in organisms which lack either or both of asparaginyl-tRNA or glutaminyl-tRNA synthetases. The reaction takes place in the presence of glutamine and ATP through an activated phospho-Asp-tRNA(Asn) or phospho-Glu-tRNA(Gln). This is Aspartyl/glutamyl-tRNA(Asn/Gln) amidotransferase subunit B from Pseudomonas syringae pv. tomato (strain ATCC BAA-871 / DC3000).